Here is a 206-residue protein sequence, read N- to C-terminus: Phosphoserine phosphatase (206 aa).

Asp-7 functions as the Nucleophile in the catalytic mechanism. Mg(2+)-binding residues include Asp-7 and Asp-9. The active-site Proton donor is the Asp-9. Substrate contacts are provided by residues Glu-16, Arg-52, 95–96 (SG), and Lys-140. Asp-163 lines the Mg(2+) pocket. A substrate-binding site is contributed by Asn-166.

The protein belongs to the HAD-like hydrolase superfamily. SerB family. Mg(2+) serves as cofactor.

The catalysed reaction is O-phospho-L-serine + H2O = L-serine + phosphate. It catalyses the reaction O-phospho-D-serine + H2O = D-serine + phosphate. The protein operates within amino-acid biosynthesis; L-serine biosynthesis; L-serine from 3-phospho-D-glycerate: step 3/3. The sequence is that of Phosphoserine phosphatase from Wolinella succinogenes (strain ATCC 29543 / DSM 1740 / CCUG 13145 / JCM 31913 / LMG 7466 / NCTC 11488 / FDC 602W) (Vibrio succinogenes).